Consider the following 332-residue polypeptide: 4-hydroxy-3-methylbut-2-enyl diphosphate reductase (332 aa).

A [4Fe-4S] cluster-binding site is contributed by C13. 2 residues coordinate (2E)-4-hydroxy-3-methylbut-2-enyl diphosphate: H41 and H75. Positions 41 and 75 each coordinate dimethylallyl diphosphate. Residues H41 and H75 each contribute to the isopentenyl diphosphate site. C97 is a [4Fe-4S] cluster binding site. H125 serves as a coordination point for (2E)-4-hydroxy-3-methylbut-2-enyl diphosphate. H125 provides a ligand contact to dimethylallyl diphosphate. Position 125 (H125) interacts with isopentenyl diphosphate. Catalysis depends on E127, which acts as the Proton donor. T168 lines the (2E)-4-hydroxy-3-methylbut-2-enyl diphosphate pocket. C229 contributes to the [4Fe-4S] cluster binding site. The (2E)-4-hydroxy-3-methylbut-2-enyl diphosphate site is built by S257, S258, N259, and S306. Positions 257, 258, 259, and 306 each coordinate dimethylallyl diphosphate. Isopentenyl diphosphate-binding residues include S257, S258, N259, and S306.

The protein belongs to the IspH family. [4Fe-4S] cluster serves as cofactor.

The enzyme catalyses isopentenyl diphosphate + 2 oxidized [2Fe-2S]-[ferredoxin] + H2O = (2E)-4-hydroxy-3-methylbut-2-enyl diphosphate + 2 reduced [2Fe-2S]-[ferredoxin] + 2 H(+). It carries out the reaction dimethylallyl diphosphate + 2 oxidized [2Fe-2S]-[ferredoxin] + H2O = (2E)-4-hydroxy-3-methylbut-2-enyl diphosphate + 2 reduced [2Fe-2S]-[ferredoxin] + 2 H(+). Its pathway is isoprenoid biosynthesis; dimethylallyl diphosphate biosynthesis; dimethylallyl diphosphate from (2E)-4-hydroxy-3-methylbutenyl diphosphate: step 1/1. It functions in the pathway isoprenoid biosynthesis; isopentenyl diphosphate biosynthesis via DXP pathway; isopentenyl diphosphate from 1-deoxy-D-xylulose 5-phosphate: step 6/6. In terms of biological role, catalyzes the conversion of 1-hydroxy-2-methyl-2-(E)-butenyl 4-diphosphate (HMBPP) into a mixture of isopentenyl diphosphate (IPP) and dimethylallyl diphosphate (DMAPP). Acts in the terminal step of the DOXP/MEP pathway for isoprenoid precursor biosynthesis. The protein is 4-hydroxy-3-methylbut-2-enyl diphosphate reductase of Chlorobaculum tepidum (strain ATCC 49652 / DSM 12025 / NBRC 103806 / TLS) (Chlorobium tepidum).